A 295-amino-acid chain; its full sequence is ATP synthase gamma chain (295 aa).

This sequence belongs to the ATPase gamma chain family. As to quaternary structure, F-type ATPases have 2 components, CF(1) - the catalytic core - and CF(0) - the membrane proton channel. CF(1) has five subunits: alpha(3), beta(3), gamma(1), delta(1), epsilon(1). CF(0) has three main subunits: a, b and c.

It is found in the cell membrane. Produces ATP from ADP in the presence of a proton gradient across the membrane. The gamma chain is believed to be important in regulating ATPase activity and the flow of protons through the CF(0) complex. The protein is ATP synthase gamma chain of Acetivibrio thermocellus (strain ATCC 27405 / DSM 1237 / JCM 9322 / NBRC 103400 / NCIMB 10682 / NRRL B-4536 / VPI 7372) (Clostridium thermocellum).